The primary structure comprises 90 residues: Lantipeptide prochlorosin 1.7 (90 aa).

The propeptide occupies 1–68; sequence MSEEQLKAFI…DAELEGVAGG (68 aa). 2,3-didehydrobutyrine is present on residues threonine 69 and threonine 73. Residues 76–79 constitute a cross-link (lanthionine (Ser-Cys)); that stretch reads SITC. Cross-links (beta-methyllanthionine (Thr-Cys)) lie at residues 78–82 and 81–90; these read TCETC and TCDLLVGKMC.

In terms of processing, cross-links are proved in vitro, when coepressed in E.coli with the ProcM lanthionine synthetase. Post-translationally, the lanthionine residue has a DL configuration (with 2S,6R stereochemistry), whereas the beta-methyllanthionine residues have a DL configuration (with 2S,3S,6R stereochemistry). Maturation of prochlorosin involves the enzymatic conversion of Thr, and Ser into dehydrated AA and the formation of thioether bonds with cysteines. This is followed by membrane translocation and cleavage of the modified precursor.

Its subcellular location is the secreted. Its function is as follows. Lanthionine-containing peptide (lantipeptide) with unknown function. Does not show antibiotic activity against Lactococcus lactis 117 and Bacillus subtilis 6633 bacteria. Organisms that produce this peptide live in oligotrophic environments at very dilute concentrations, suggesting this peptide is not secreted to influence other bacteria. The sequence is that of Lantipeptide prochlorosin 1.7 from Prochlorococcus marinus (strain MIT 9313).